A 230-amino-acid chain; its full sequence is Large ribosomal subunit protein uL1 (230 aa).

Belongs to the universal ribosomal protein uL1 family. Part of the 50S ribosomal subunit.

Binds directly to 23S rRNA. The L1 stalk is quite mobile in the ribosome, and is involved in E site tRNA release. Its function is as follows. Protein L1 is also a translational repressor protein, it controls the translation of the L11 operon by binding to its mRNA. The chain is Large ribosomal subunit protein uL1 from Metamycoplasma arthritidis (strain 158L3-1) (Mycoplasma arthritidis).